The primary structure comprises 221 residues: MITLSAEQCRIIGVMLEKETTTPEQYPLSLNGITTGCNQKSNRDPVMSLSESDVQNLVDELVQMNQLMVDQKASTRVNKYFHRFCDTEFGNLKFTPQQRAVICVLFLRGPQTPGELRTRTNRLADFADVSEVDNTLTQLQDLNGLTLVRKLEREPGKRESRYVHLLSDVDESSFTQAVTTQTEVVLSEEQTSLTQRVTELEQQVASLTEQINCITELLNDD.

This sequence belongs to the UPF0502 family.

The polypeptide is UPF0502 protein CPS_0106 (Colwellia psychrerythraea (strain 34H / ATCC BAA-681) (Vibrio psychroerythus)).